We begin with the raw amino-acid sequence, 239 residues long: Probable transcriptional regulatory protein BCG9842_B4761 (239 aa).

The protein belongs to the TACO1 family. YeeN subfamily.

The protein resides in the cytoplasm. This chain is Probable transcriptional regulatory protein BCG9842_B4761, found in Bacillus cereus (strain G9842).